The following is a 294-amino-acid chain: ATP synthase gamma chain (294 aa).

Belongs to the ATPase gamma chain family. As to quaternary structure, F-type ATPases have 2 components, CF(1) - the catalytic core - and CF(0) - the membrane proton channel. CF(1) has five subunits: alpha(3), beta(3), gamma(1), delta(1), epsilon(1). CF(0) has three main subunits: a, b and c.

It localises to the cell inner membrane. Its function is as follows. Produces ATP from ADP in the presence of a proton gradient across the membrane. The gamma chain is believed to be important in regulating ATPase activity and the flow of protons through the CF(0) complex. This chain is ATP synthase gamma chain, found in Campylobacter jejuni subsp. jejuni serotype O:23/36 (strain 81-176).